The primary structure comprises 117 residues: Anti-sigma F factor antagonist (117 aa).

The region spanning 3-113 (LQIEMEHHRG…DNEVNALTEL (111 aa)) is the STAS domain. Ser-58 is subject to Phosphoserine.

Belongs to the anti-sigma-factor antagonist family. In terms of processing, phosphorylated by SpoIIAB on a serine residue.

In the phosphorylated form it could act as an anti-anti-sigma factor that counteracts SpoIIAB and thus releases sigma f from inhibition. The protein is Anti-sigma F factor antagonist (spoIIAA) of Paenibacillus polymyxa (Bacillus polymyxa).